The primary structure comprises 806 residues: Leucine--tRNA ligase (806 aa).

Residues 40–51 (PYPSGAGLHVGH) carry the 'HIGH' region motif. Residues 576–580 (KMSKS) carry the 'KMSKS' region motif. An ATP-binding site is contributed by lysine 579.

It belongs to the class-I aminoacyl-tRNA synthetase family.

It is found in the cytoplasm. The catalysed reaction is tRNA(Leu) + L-leucine + ATP = L-leucyl-tRNA(Leu) + AMP + diphosphate. The sequence is that of Leucine--tRNA ligase from Halalkalibacterium halodurans (strain ATCC BAA-125 / DSM 18197 / FERM 7344 / JCM 9153 / C-125) (Bacillus halodurans).